A 179-amino-acid polypeptide reads, in one-letter code: Cytochrome b6-f complex iron-sulfur subunit (179 aa).

Residues 20–42 (LLTFGTITGVAAGALYPIVKYFI) form a helical membrane-spanning segment. One can recognise a Rieske domain in the interval 60–161 (GNDVIVSQFL…ANVTDNDKVV (102 aa)). Positions 107, 109, 125, and 128 each coordinate [2Fe-2S] cluster. Cys112 and Cys127 are disulfide-bonded.

The protein belongs to the Rieske iron-sulfur protein family. In terms of assembly, the 4 large subunits of the cytochrome b6-f complex are cytochrome b6, subunit IV (17 kDa polypeptide, PetD), cytochrome f and the Rieske protein, while the 4 small subunits are PetG, PetL, PetM and PetN. The complex functions as a dimer. [2Fe-2S] cluster serves as cofactor.

The protein localises to the cellular thylakoid membrane. It catalyses the reaction 2 oxidized [plastocyanin] + a plastoquinol + 2 H(+)(in) = 2 reduced [plastocyanin] + a plastoquinone + 4 H(+)(out). Its function is as follows. Component of the cytochrome b6-f complex, which mediates electron transfer between photosystem II (PSII) and photosystem I (PSI), cyclic electron flow around PSI, and state transitions. The polypeptide is Cytochrome b6-f complex iron-sulfur subunit (Microcystis aeruginosa (strain NIES-843 / IAM M-2473)).